Reading from the N-terminus, the 221-residue chain is GTP-binding nuclear protein Ran-1 (221 aa).

Residues 10–174 enclose the Small GTPase Ran-type domain; sequence DYPSFKLVIV…LYLARKLAGD (165 aa). 21–28 is a GTP binding site; sequence DGGTGKTT. Residues 40–48 are switch-I; the sequence is KKYEPTIGV. GTP is bound by residues glycine 71, 125–128, and 153–155; these read NKVD and SAK. A switch-II region spans residues 71 to 87; it reads GQEKFGGLRDGYYIHGQ.

Belongs to the small GTPase superfamily. Ran family. Found in a nuclear export complex with RanGTP, exportin and pre-miRNA.

It localises to the nucleus. Its function is as follows. GTP-binding protein involved in nucleocytoplasmic transport. Required for the import of protein into the nucleus and also for RNA export. Involved in chromatin condensation and control of cell cycle. The sequence is that of GTP-binding nuclear protein Ran-1 (RAN1) from Oryza sativa subsp. indica (Rice).